The primary structure comprises 487 residues: Argininosuccinate lyase (487 aa).

This sequence belongs to the lyase 1 family. Argininosuccinate lyase subfamily.

The protein localises to the cytoplasm. The enzyme catalyses 2-(N(omega)-L-arginino)succinate = fumarate + L-arginine. It functions in the pathway amino-acid biosynthesis; L-arginine biosynthesis; L-arginine from L-ornithine and carbamoyl phosphate: step 3/3. The protein is Argininosuccinate lyase of Natranaerobius thermophilus (strain ATCC BAA-1301 / DSM 18059 / JW/NM-WN-LF).